A 62-amino-acid chain; its full sequence is Small, acid-soluble spore protein A (62 aa).

It belongs to the alpha/beta-type SASP family.

Functionally, SASP are bound to spore DNA. They are double-stranded DNA-binding proteins that cause DNA to change to an a-like conformation. They protect the DNA backbone from chemical and enzymatic cleavage and are thus involved in dormant spore's high resistance to UV light. The chain is Small, acid-soluble spore protein A (sasP-A) from Priestia megaterium (Bacillus megaterium).